The primary structure comprises 142 residues: Putative pre-16S rRNA nuclease (142 aa).

Belongs to the YqgF nuclease family.

The protein localises to the cytoplasm. Its function is as follows. Could be a nuclease involved in processing of the 5'-end of pre-16S rRNA. The polypeptide is Putative pre-16S rRNA nuclease (Lactobacillus acidophilus (strain ATCC 700396 / NCK56 / N2 / NCFM)).